Here is a 324-residue protein sequence, read N- to C-terminus: Olfactory receptor 5T17 (324 aa).

Topologically, residues 1-37 (MPRTPSYTNTKTTQVNNVTEITVFILLGFTDDVDMNI) are extracellular. N-linked (GlcNAc...) asparagine glycosylation occurs at asparagine 17. A helical transmembrane segment spans residues 38-58 (FLFILFLAIYVVTLIGNLGLV). Residues 59 to 66 (VLVIEDSR) lie on the Cytoplasmic side of the membrane. A helical membrane pass occupies residues 67-87 (LHNPMYYFLTVLSSLDACFSS). The Extracellular portion of the chain corresponds to 88–111 (VLTPKMLVNFLSKNKSISFAGCAT). The N-linked (GlcNAc...) asparagine glycan is linked to asparagine 101. A disulfide bridge links cysteine 109 with cysteine 201. A helical transmembrane segment spans residues 112 to 132 (QMLLFVTFGTTECFLLAAMAY). Topologically, residues 133 to 145 (DRYLAIYSPLLYA) are cytoplasmic. Residues 146 to 166 (VRMSPRVYVPLIIASYTGGIL) traverse the membrane as a helical segment. The Extracellular segment spans residues 167-208 (HATIHTVATFSLSFCGSNEIRHVFCDIPPLLALSCSDTHLNQ). Residues 209–229 (LLLFYCAGSIELITILIVLVS) traverse the membrane as a helical segment. The Cytoplasmic portion of the chain corresponds to 230–249 (YGFVLLAILKINSAEGRRKI). A helical transmembrane segment spans residues 250-270 (FSTCGAHLTGVSIFHGTILFM). At 271 to 283 (YVRPSSNYTLEQD) the chain is on the extracellular side. N-linked (GlcNAc...) asparagine glycosylation occurs at asparagine 277. A helical transmembrane segment spans residues 284–304 (MVVSTFYTIVIPMLNPIIYSL). Residues 305 to 324 (RNKDVKEAMRKLLKRKLVHE) lie on the Cytoplasmic side of the membrane.

This sequence belongs to the G-protein coupled receptor 1 family.

It localises to the cell membrane. Its function is as follows. Potential odorant receptor. The sequence is that of Olfactory receptor 5T17 from Mus musculus (Mouse).